Consider the following 460-residue polypeptide: Cysteine--tRNA ligase (460 aa).

Residue Cys-28 coordinates Zn(2+). The 'HIGH' region signature appears at 30–40; the sequence is MTVYDYCHLGH. The Zn(2+) site is built by Cys-209, His-234, and Glu-238. Residues 266–270 carry the 'KMSKS' region motif; the sequence is KMSKS. Position 269 (Lys-269) interacts with ATP.

Belongs to the class-I aminoacyl-tRNA synthetase family. As to quaternary structure, monomer. Zn(2+) serves as cofactor.

The protein localises to the cytoplasm. It catalyses the reaction tRNA(Cys) + L-cysteine + ATP = L-cysteinyl-tRNA(Cys) + AMP + diphosphate. The chain is Cysteine--tRNA ligase from Pseudomonas putida (strain GB-1).